The chain runs to 842 residues: Protein translocase subunit SecA (842 aa).

ATP contacts are provided by residues Gln85, 103–107 (GEGKT), and Asp493. Zn(2+) contacts are provided by Cys825, Cys827, Cys836, and His837.

It belongs to the SecA family. In terms of assembly, monomer and homodimer. Part of the essential Sec protein translocation apparatus which comprises SecA, SecYEG and auxiliary proteins SecDF. Other proteins may also be involved. Zn(2+) is required as a cofactor.

Its subcellular location is the cell membrane. It is found in the cytoplasm. It carries out the reaction ATP + H2O + cellular proteinSide 1 = ADP + phosphate + cellular proteinSide 2.. Part of the Sec protein translocase complex. Interacts with the SecYEG preprotein conducting channel. Has a central role in coupling the hydrolysis of ATP to the transfer of proteins into and across the cell membrane, serving as an ATP-driven molecular motor driving the stepwise translocation of polypeptide chains across the membrane. In Streptococcus equi subsp. equi (strain 4047), this protein is Protein translocase subunit SecA.